The primary structure comprises 287 residues: uncharacterized protein (287 aa).

Basic and acidic residues predominate over residues 1–17; sequence MRWQGRRESDNVEDRRN. Positions 1–29 are disordered; the sequence is MRWQGRRESDNVEDRRNSSGGPSMGGPGF. A helical membrane pass occupies residues 38–60; that stretch reads LILLIVVLVAGYYGVDLTGLMTG.

The protein resides in the membrane. This is an uncharacterized protein from Escherichia coli O6:H1 (strain CFT073 / ATCC 700928 / UPEC).